The primary structure comprises 384 residues: GTPase Obg (384 aa).

The 159-residue stretch at 1–159 (MKFIDEAKIE…RSLQLELKVL (159 aa)) folds into the Obg domain. Residues 20–46 (ATSFRREKFVPRGGPDGGDGGKGGSVW) are disordered. Residues 33–43 (GPDGGDGGKGG) show a composition bias toward gly residues. An OBG-type G domain is found at 160 to 348 (ADVGLLGMPN…LVHQINQYLI (189 aa)). GTP-binding positions include 166-173 (GMPNAGKS), 191-195 (FTTLH), 213-216 (DIPG), 284-287 (NKLD), and 329-331 (SAL). The Mg(2+) site is built by serine 173 and threonine 193. Residues 364 to 384 (ATNVEIAEQQPKTDTGVFKPE) are disordered.

Belongs to the TRAFAC class OBG-HflX-like GTPase superfamily. OBG GTPase family. In terms of assembly, monomer. Requires Mg(2+) as cofactor.

The protein localises to the cytoplasm. Its function is as follows. An essential GTPase which binds GTP, GDP and possibly (p)ppGpp with moderate affinity, with high nucleotide exchange rates and a fairly low GTP hydrolysis rate. Plays a role in control of the cell cycle, stress response, ribosome biogenesis and in those bacteria that undergo differentiation, in morphogenesis control. The protein is GTPase Obg of Neisseria meningitidis serogroup A / serotype 4A (strain DSM 15465 / Z2491).